Consider the following 89-residue polypeptide: Small ribosomal subunit protein bS16c (89 aa).

Belongs to the bacterial ribosomal protein bS16 family.

Its subcellular location is the plastid. It is found in the chloroplast. This is Small ribosomal subunit protein bS16c from Glycine max (Soybean).